Here is a 736-residue protein sequence, read N- to C-terminus: Microtubule-associated protein mu-2 (736 aa).

This sequence belongs to the orthoreovirus mu-2 protein family. As to quaternary structure, interacts with protein mu-NS; in viral inclusions. Interacts with polymerase lambda-3; this interaction stimulates the ATPase activity of mu-2. Requires a divalent metal cation as cofactor.

The protein localises to the virion. The protein resides in the host cytoplasm. It localises to the host cytoskeleton. Its function is as follows. Minor inner capsid (core) component. Displays NTPase and RNA 5'-triphosphatase (RTPase) activities. ATP is the preferred substrate for hydrolysis. May function as a cofactor of polymerase lambda-3. Associates with microtubules and plays a role in the formation, structural organization and morphology of viral inclusions, where the assembly of cores and the replication of viral RNA occur. Together with mu-NS, recruits the other core proteins to these inclusions. This Mammalia (T3D) protein is Microtubule-associated protein mu-2 (M1).